The chain runs to 171 residues: Urease accessory protein UreE (171 aa).

Residues Ser-143–Glu-171 are disordered. The span at His-152 to Glu-171 shows a compositional bias: basic and acidic residues.

This sequence belongs to the UreE family.

It is found in the cytoplasm. In terms of biological role, involved in urease metallocenter assembly. Binds nickel. Probably functions as a nickel donor during metallocenter assembly. The chain is Urease accessory protein UreE from Brucella abortus biovar 1 (strain 9-941).